A 116-amino-acid chain; its full sequence is Large ribosomal subunit protein bL20c (116 aa).

The protein belongs to the bacterial ribosomal protein bL20 family.

It localises to the plastid. The protein resides in the chloroplast. Functionally, binds directly to 23S ribosomal RNA and is necessary for the in vitro assembly process of the 50S ribosomal subunit. It is not involved in the protein synthesizing functions of that subunit. In Marchantia polymorpha (Common liverwort), this protein is Large ribosomal subunit protein bL20c (rpl20).